The following is a 2094-amino-acid chain: Non-reducing polyketide synthase ustP (2094 aa).

Residues 9-243 (VFGDLSVPYH…GKIQVGGLFH (235 aa)) are N-terminal acylcarrier protein transacylase (SAT) domain. The tract at residues 357 to 377 (NTAGVDSSSRGSGHADAEKQP) is disordered. The Ketosynthase family 3 (KS3) domain occupies 379–813 (RSKIAIIGFS…GGNSSVLVED (435 aa)). Residues C551, H686, and H727 each act as for beta-ketoacyl synthase activity in the active site. The segment at 914 to 1227 (FSFTGQGSQY…EDDCKIFTPA (314 aa)) is malonyl-CoA:ACP transacylase (MAT) domain. S1004 serves as the catalytic For acyl/malonyl transferase activity. Residues 1305 to 1629 (TTSVQYITAE…QRKVLDLVLP (325 aa)) are product template (PT) domain. The interval 1308-1445 (VQYITAESYG…CSGFFTDKSR (138 aa)) is N-terminal hotdog fold. A PKS/mFAS DH domain is found at 1308-1625 (VQYITAESYG…FAAVQRKVLD (318 aa)). Catalysis depends on H1341, which acts as the Proton acceptor; for dehydratase activity. Residues 1473–1625 (GSVHMIKTGM…FAAVQRKVLD (153 aa)) form a C-terminal hotdog fold region. D1536 serves as the catalytic Proton donor; for dehydratase activity. A compositionally biased stretch (low complexity) spans 1644-1671 (AAAAPSQRQQQQQQQQQQQPAQPVAASQ). The tract at residues 1644-1689 (AAAAPSQRQQQQQQQQQQQPAQPVAASQESGMDDMPPTLVPSEKKD) is disordered. Positions 1689–1763 (DVPSEKLKVI…ELVRHILGSS (75 aa)) constitute a Carrier domain. O-(pantetheine 4'-phosphoryl)serine is present on S1723. The segment covering 1762 to 1778 (SSTPSSDSGPATPSITP) has biased composition (polar residues). The tract at residues 1762–1782 (SSTPSSDSGPATPSITPLQEP) is disordered. The tract at residues 1844–2069 (KVWLFPDGSG…GVVEGAHHFS (226 aa)) is claisen cyclase domain. Residue S1916 is the For Claisen cyclase activity of the active site.

The catalysed reaction is 6 malonyl-CoA + acetyl-CoA + 6 H(+) = naphtopyrone YWA1 + 6 CO2 + 7 CoA + H2O. Its pathway is secondary metabolite biosynthesis. Non-reducing polyketide synthase; part of the gene cluster that mediates the biosynthesis of ustilaginoidins, dimeric gamma-naphthopyrones isolated from different fungal species. The first step in the biosynthesis of ustilaginoidins is the production of gamma-naphthopyrone precursor YWA1 by the non-reducing polyketide synthase ustP, via condensation of one acetyl-CoA starter unit with 6 malonyl-CoA units. YWA1 is then probably substrate of the ustZ to yield norrubrofusarin via a dehydration reaction. A key enzyme in the biosynthetic pathway is the laccase ustL, which catalyzes the oxidative dimerization of norrubrofusarin to ustilaginoidin A. It can produce the M- and P-atropisomers in varying amounts, depending on the reaction conditions. For the biosynthesis of 3-methylustilaginoid in derivatives such as chaetochromin A, a methylated derivative of YWA1 is required. The C-methylation is considered to be catalyzed by ustM, the phosphopantetheine attachment site of which indicates that it acts on the growing polyketide chain before release of the product. For the biosynthesis of chaetochromin A, it is assumed that saturation of the D2 double bond takes place before dimerization, and is probably catalyzed by an external reductase because no candidate gene was identified within the cluster. The protein is Non-reducing polyketide synthase ustP of Ustilaginoidea virens (Rice false smut fungus).